Consider the following 285-residue polypeptide: 1,4-dihydroxy-2-naphthoyl-CoA synthase (285 aa).

Substrate-binding positions include arginine 45, 84–88, tyrosine 97, 129–133, threonine 155, serine 161, tyrosine 258, and lysine 273; these read SGGDQ and YAIGG. 154–156 serves as a coordination point for hydrogencarbonate; the sequence is QTG.

This sequence belongs to the enoyl-CoA hydratase/isomerase family. MenB subfamily. Hydrogencarbonate serves as cofactor.

It carries out the reaction 2-succinylbenzoyl-CoA + H(+) = 1,4-dihydroxy-2-naphthoyl-CoA + H2O. It participates in quinol/quinone metabolism; 1,4-dihydroxy-2-naphthoate biosynthesis; 1,4-dihydroxy-2-naphthoate from chorismate: step 6/7. The protein operates within quinol/quinone metabolism; menaquinone biosynthesis. Functionally, converts o-succinylbenzoyl-CoA (OSB-CoA) to 1,4-dihydroxy-2-naphthoyl-CoA (DHNA-CoA). The chain is 1,4-dihydroxy-2-naphthoyl-CoA synthase from Haemophilus influenzae (strain ATCC 51907 / DSM 11121 / KW20 / Rd).